We begin with the raw amino-acid sequence, 335 residues long: Beta-hexosaminidase (335 aa).

Residues D60, R68, R133, and 163 to 164 (KH) contribute to the substrate site. The Proton donor/acceptor role is filled by H176. The active-site Nucleophile is the D247.

It belongs to the glycosyl hydrolase 3 family. NagZ subfamily.

It is found in the cytoplasm. It carries out the reaction Hydrolysis of terminal non-reducing N-acetyl-D-hexosamine residues in N-acetyl-beta-D-hexosaminides.. It functions in the pathway cell wall biogenesis; peptidoglycan recycling. In terms of biological role, plays a role in peptidoglycan recycling by cleaving the terminal beta-1,4-linked N-acetylglucosamine (GlcNAc) from peptide-linked peptidoglycan fragments, giving rise to free GlcNAc, anhydro-N-acetylmuramic acid and anhydro-N-acetylmuramic acid-linked peptides. The polypeptide is Beta-hexosaminidase (Xylella fastidiosa (strain M12)).